The sequence spans 499 residues: Glycerol kinase (499 aa).

Threonine 14 provides a ligand contact to ADP. Positions 14, 15, and 16 each coordinate ATP. A sn-glycerol 3-phosphate-binding site is contributed by threonine 14. Arginine 18 contacts ADP. Residues arginine 84, glutamate 85, tyrosine 136, and aspartate 245 each contribute to the sn-glycerol 3-phosphate site. Glycerol contacts are provided by arginine 84, glutamate 85, tyrosine 136, aspartate 245, and glutamine 246. ADP-binding residues include threonine 267 and glycine 310. The ATP site is built by threonine 267, glycine 310, glutamine 314, and glycine 411. Residues glycine 411 and asparagine 415 each coordinate ADP.

It belongs to the FGGY kinase family.

It catalyses the reaction glycerol + ATP = sn-glycerol 3-phosphate + ADP + H(+). The protein operates within polyol metabolism; glycerol degradation via glycerol kinase pathway; sn-glycerol 3-phosphate from glycerol: step 1/1. Its activity is regulated as follows. Inhibited by fructose 1,6-bisphosphate (FBP). Functionally, key enzyme in the regulation of glycerol uptake and metabolism. Catalyzes the phosphorylation of glycerol to yield sn-glycerol 3-phosphate. This chain is Glycerol kinase, found in Nitrosomonas eutropha (strain DSM 101675 / C91 / Nm57).